The chain runs to 154 residues: Glycosylation-dependent cell adhesion molecule 1 (154 aa).

A signal peptide spans M1–A18. T34 carries an O-linked (GalNAc...) threonine; partial glycan. A phosphoserine mark is found at S48, S53, S57, S59, and S65. The segment covering D51–S65 has biased composition (basic and acidic residues). The tract at residues D51–T115 is disordered. N-linked (GlcNAc...) asparagine glycosylation occurs at N96.

The protein belongs to the PP3/GlyCAM-1 family. Highly and specifically expressed in the lactating mammary gland.

The protein localises to the membrane. The polypeptide is Glycosylation-dependent cell adhesion molecule 1 (GLYCAM1) (Capra hircus (Goat)).